The sequence spans 401 residues: Argininosuccinate synthase (401 aa).

9–17 serves as a coordination point for ATP; the sequence is AYSGGLDTS. Y87 contacts L-citrulline. Residue G117 coordinates ATP. L-aspartate contacts are provided by T119, N123, and D124. L-citrulline is bound at residue N123. Positions 127, 176, 185, 261, and 273 each coordinate L-citrulline.

This sequence belongs to the argininosuccinate synthase family. Type 1 subfamily. As to quaternary structure, homotetramer.

It is found in the cytoplasm. It catalyses the reaction L-citrulline + L-aspartate + ATP = 2-(N(omega)-L-arginino)succinate + AMP + diphosphate + H(+). It functions in the pathway amino-acid biosynthesis; L-arginine biosynthesis; L-arginine from L-ornithine and carbamoyl phosphate: step 2/3. The protein is Argininosuccinate synthase of Prosthecochloris aestuarii (strain DSM 271 / SK 413).